A 283-amino-acid chain; its full sequence is Formamidopyrimidine-DNA glycosylase (283 aa).

P2 acts as the Schiff-base intermediate with DNA in catalysis. Catalysis depends on E3, which acts as the Proton donor. The Proton donor; for beta-elimination activity role is filled by K58. DNA contacts are provided by H100, R119, and R162. Residues 247 to 283 (DVYGREGEPCRRAGCTGTVTRITQSGRSSFYCGKCQR) form an FPG-type zinc finger. The active-site Proton donor; for delta-elimination activity is R273.

This sequence belongs to the FPG family. In terms of assembly, monomer. Zn(2+) is required as a cofactor.

It carries out the reaction Hydrolysis of DNA containing ring-opened 7-methylguanine residues, releasing 2,6-diamino-4-hydroxy-5-(N-methyl)formamidopyrimidine.. The enzyme catalyses 2'-deoxyribonucleotide-(2'-deoxyribose 5'-phosphate)-2'-deoxyribonucleotide-DNA = a 3'-end 2'-deoxyribonucleotide-(2,3-dehydro-2,3-deoxyribose 5'-phosphate)-DNA + a 5'-end 5'-phospho-2'-deoxyribonucleoside-DNA + H(+). Functionally, involved in base excision repair of DNA damaged by oxidation or by mutagenic agents. Acts as a DNA glycosylase that recognizes and removes damaged bases. Has a preference for oxidized purines, such as 7,8-dihydro-8-oxoguanine (8-oxoG). Has AP (apurinic/apyrimidinic) lyase activity and introduces nicks in the DNA strand. Cleaves the DNA backbone by beta-delta elimination to generate a single-strand break at the site of the removed base with both 3'- and 5'-phosphates. The chain is Formamidopyrimidine-DNA glycosylase from Ruegeria sp. (strain TM1040) (Silicibacter sp.).